Consider the following 369-residue polypeptide: Biglycan (369 aa).

The N-terminal stretch at 1–16 (MWPLWPLAALLALSQA) is a signal peptide. Residues 17-37 (LPFEQKAFWDFTLDDGLPMLN) constitute a propeptide that is removed on maturation. Ser-42 and Ser-48 each carry an O-linked (Xyl...) (glycosaminoglycan) serine glycan. Disulfide bonds link Cys-64–Cys-70 and Cys-68–Cys-77. 12 LRR repeats span residues 83–103 (KAVP…NNDI), 104–127 (SELR…NNKI), 128–151 (SKIH…KNHL), 152–172 (VEIP…DNRI), 173–196 (RKVP…GNPL), 197–221 (ENSG…EAKL), 222–242 (TGIP…HNKI), 243–266 (QAIE…HNQI), 267–290 (RMIE…NNKL), 291–313 (SRVP…TNNI), 314–343 (TKVG…NNPV), and 344–369 (PYWE…NYKK). O-linked (Xyl...) (glycosaminoglycan) serine glycosylation is found at Ser-181 and Ser-199. Asn-271 and Asn-312 each carry an N-linked (GlcNAc...) asparagine glycan. A disulfide bridge links Cys-322 with Cys-355.

The protein belongs to the small leucine-rich proteoglycan (SLRP) family. SLRP class I subfamily. As to quaternary structure, homodimer. Forms a ternary complex with MFAP2 and ELN. In terms of processing, the two attached glycosaminoglycan chains can be either chondroitin sulfate or dermatan sulfate. Found in several connective tissues, especially in articular cartilages.

It is found in the secreted. The protein localises to the extracellular space. Its subcellular location is the extracellular matrix. Its function is as follows. May be involved in collagen fiber assembly. The protein is Biglycan (BGN) of Bos taurus (Bovine).